The chain runs to 754 residues: Glutathione biosynthesis bifunctional protein GshAB (754 aa).

The interval 1–332 (MTLNQLLQKL…QGHALNEKIA (332 aa)) is glutamate--cysteine ligase. An ATP-grasp domain is found at 488 to 746 (KKILADASFP…ITTKILDKLF (259 aa)). 515–573 (PLIKDKQIVVKPKSTNFGLGISIFQEPASLDNYQKALEIAFAEDTSVLVEEFIPGTEYR) contributes to the ATP binding site. Mg(2+)-binding residues include aspartate 695, glutamate 716, and asparagine 718. The Mn(2+) site is built by aspartate 695, glutamate 716, and asparagine 718.

The protein in the N-terminal section; belongs to the glutamate--cysteine ligase type 1 family. Type 2 subfamily. In terms of assembly, monomer. Mg(2+) is required as a cofactor. It depends on Mn(2+) as a cofactor.

The enzyme catalyses L-cysteine + L-glutamate + ATP = gamma-L-glutamyl-L-cysteine + ADP + phosphate + H(+). It catalyses the reaction gamma-L-glutamyl-L-cysteine + glycine + ATP = glutathione + ADP + phosphate + H(+). It functions in the pathway sulfur metabolism; glutathione biosynthesis; glutathione from L-cysteine and L-glutamate: step 1/2. It participates in sulfur metabolism; glutathione biosynthesis; glutathione from L-cysteine and L-glutamate: step 2/2. In terms of biological role, synthesizes glutathione from L-glutamate and L-cysteine via gamma-L-glutamyl-L-cysteine. The protein is Glutathione biosynthesis bifunctional protein GshAB of Streptococcus thermophilus (strain ATCC BAA-250 / LMG 18311).